Consider the following 192-residue polypeptide: Pyridoxal 5'-phosphate synthase subunit PdxT (192 aa).

Residue 46–48 (GES) coordinates L-glutamine. The active-site Nucleophile is the cysteine 76. L-glutamine-binding positions include arginine 103 and 131–132 (IR). Residues histidine 167 and glutamate 169 each act as charge relay system in the active site.

It belongs to the glutaminase PdxT/SNO family. In terms of assembly, in the presence of PdxS, forms a dodecamer of heterodimers. Only shows activity in the heterodimer.

It catalyses the reaction aldehydo-D-ribose 5-phosphate + D-glyceraldehyde 3-phosphate + L-glutamine = pyridoxal 5'-phosphate + L-glutamate + phosphate + 3 H2O + H(+). The enzyme catalyses L-glutamine + H2O = L-glutamate + NH4(+). It participates in cofactor biosynthesis; pyridoxal 5'-phosphate biosynthesis. Its function is as follows. Catalyzes the hydrolysis of glutamine to glutamate and ammonia as part of the biosynthesis of pyridoxal 5'-phosphate. The resulting ammonia molecule is channeled to the active site of PdxS. This Koribacter versatilis (strain Ellin345) protein is Pyridoxal 5'-phosphate synthase subunit PdxT.